We begin with the raw amino-acid sequence, 191 residues long: Small ribosomal subunit protein uS7 (191 aa).

The disordered stretch occupies residues 56–80; that stretch reads NKSGEQGDGDGESGGKAGGIKKRSL.

It belongs to the universal ribosomal protein uS7 family. As to quaternary structure, part of the 30S ribosomal subunit. Contacts proteins S9 and S11.

Its function is as follows. One of the primary rRNA binding proteins, it binds directly to 16S rRNA where it nucleates assembly of the head domain of the 30S subunit. Is located at the subunit interface close to the decoding center, probably blocks exit of the E-site tRNA. The chain is Small ribosomal subunit protein uS7 from Coxiella burnetii (strain RSA 493 / Nine Mile phase I).